The following is a 1484-amino-acid chain: Glutamate receptor ionotropic, NMDA 2B (1484 aa).

Positions 1-26 are cleaved as a signal peptide; sequence MKPRAECCSPKFWLVLAVLAVSGSRA. The Extracellular segment spans residues 27-555; sequence RSQKSPPSIG…SPSAFLEPFS (529 aa). N74 is a glycosylation site (N-linked (GlcNAc...) asparagine). C86 and C321 are disulfide-bonded. Zn(2+) contacts are provided by H127 and E284. N-linked (GlcNAc...) asparagine glycosylation is found at N341, N348, N444, and N491. 2 cysteine pairs are disulfide-bonded: C429/C456 and C436/C457. The L-glutamate site is built by T514 and R519. N-linked (GlcNAc...) asparagine glycosylation is present at N542. A helical membrane pass occupies residues 556–576; it reads ADVWVMMFVMLLIVSAVAVFV. At 577 to 601 the chain is on the cytoplasmic side; that stretch reads FEYFSPVGYNRCLADGREPGGPSFT. The discontinuously helical intramembrane region spans 602-613; the sequence is IGKAIWLLWGLV. A pore-forming region spans residues 604–623; that stretch reads KAIWLLWGLVFNNSVPVQNP. The Cytoplasmic segment spans residues 614 to 627; it reads FNNSVPVQNPKGTT. Residues 628–647 form a helical membrane-spanning segment; the sequence is SKIMVSVWAFFAVIFLASYT. Topologically, residues 648–819 are extracellular; sequence ANLAAFMIQE…SSQLDIDNMA (172 aa). N688 is a glycosylation site (N-linked (GlcNAc...) asparagine). L-glutamate-binding positions include 690–691 and D732; that span reads ST. A helical transmembrane segment spans residues 820-835; the sequence is GVFYMLGAAMALSLIT. Residues 836–1484 are Cytoplasmic-facing; sequence FICEHLFYWQ…EKLSSIESDV (649 aa). S882, S886, S917, and S920 each carry phosphoserine. Phosphotyrosine is present on residues Y962 and Y1039. 3 positions are modified to phosphoserine: S1058, S1061, and S1064. A disordered region spans residues 1074–1097; sequence EGNAAKRRKQQYKDSLKKRPASAK. 2 positions are modified to phosphotyrosine: Y1109 and Y1133. S1143 bears the Phosphoserine mark. At Y1155 the chain carries Phosphotyrosine. The segment at 1161–1194 is disordered; it reads DFKRDSVSGGGPCTNRSHIKHGTGDKHGVVSGVP. Phosphoserine is present on residues S1255 and S1259. The tract at residues 1271-1301 is disordered; it reads AVTSNASTTKYPQSPTNSKAQKKNRNKLRRQ. A compositionally biased stretch (polar residues) spans 1272-1289; it reads VTSNASTTKYPQSPTNSK. Positions 1290-1301 are enriched in basic residues; that stretch reads AQKKNRNKLRRQ. An interaction with DAPK1 region spans residues 1292–1304; the sequence is KKNRNKLRRQHSY. S1303 is subject to Phosphoserine; by DAPK1. Y1474 carries the phosphotyrosine modification. Residues 1482-1484 carry the PDZ-binding motif; it reads SDV.

The protein belongs to the glutamate-gated ion channel (TC 1.A.10.1) family. NR2B/GRIN2B subfamily. As to quaternary structure, heterotetramer. Forms heterotetrameric channels composed of two GluN1/zeta subunits (GRIN1), and two identical GluN2/epsilon subunits (GRIN2A, GRIN2B, GRIN2C or GRIN2D) or GluN3 subunits (GRIN3A or GRIN3B) (in vitro). Can also form heterotetrameric channels that contain at least two GluN1 subunits and at least two different GluN2 subunits (or a combination of one GluN2 and one GluN3 subunits) (in vitro). In vivo, the subunit composition may depend on the expression levels of the different subunits. Found in a complex with GRIN1 and GRIN3B. Found in a complex with GRIN1, GRIN3A and PPP2CB. Interacts with PDZ domains of PATJ, DLG3 and DLG4. Interacts with HIP1 and NETO1. Interacts with MAGI3. Interacts with DAPK1. Found in a complex with GRIN1 and PRR7. Interacts with PRR7. Interacts with CAMK2A. Interacts with ARC; preventing ARC oligomerization. Interacts with TMEM25. Interacts (via the extreme C-terminus) with FRMPD2 (via the second PDZ domain); the interaction is direct and is likely to promote NMDAR-mediated neural signal transmission. Interacts with FAM81A; the interaction facilitates condensate formation via liquid-liquid phase separation. Post-translationally, phosphorylated on tyrosine residues. Phosphorylation at Ser-1303 by DAPK1 enhances synaptic NMDA receptor channel activity. In terms of tissue distribution, primarily found in the fronto-parieto-temporal cortex and hippocampus pyramidal cells, lower expression in the basal ganglia.

Its subcellular location is the cell membrane. It is found in the postsynaptic cell membrane. The protein localises to the cell projection. It localises to the dendrite. The protein resides in the late endosome. Its subcellular location is the lysosome. It is found in the cytoplasm. The protein localises to the cytoskeleton. The enzyme catalyses Ca(2+)(in) = Ca(2+)(out). It carries out the reaction Na(+)(in) = Na(+)(out). It catalyses the reaction K(+)(in) = K(+)(out). Its function is as follows. Component of N-methyl-D-aspartate (NMDA) receptors (NMDARs) that function as heterotetrameric, ligand-gated cation channels with high calcium permeability and voltage-dependent block by Mg(2+). Participates in synaptic plasticity for learning and memory formation by contributing to the long-term depression (LTD) of hippocampus membrane currents. Channel activation requires binding of the neurotransmitter L-glutamate to the GluN2 subunit, glycine or D-serine binding to the GluN1 subunit, plus membrane depolarization to eliminate channel inhibition by Mg(2+). NMDARs mediate simultaneously the potasium efflux and the influx of calcium and sodium. Each GluN2 subunit confers differential attributes to channel properties, including activation, deactivation and desensitization kinetics, pH sensitivity, Ca2(+) permeability, and binding to allosteric modulators. In concert with DAPK1 at extrasynaptic sites, acts as a central mediator for stroke damage. Its phosphorylation at Ser-1303 by DAPK1 enhances synaptic NMDA receptor channel activity inducing injurious Ca2+ influx through them, resulting in an irreversible neuronal death. This is Glutamate receptor ionotropic, NMDA 2B from Homo sapiens (Human).